A 919-amino-acid chain; its full sequence is uncharacterized protein (919 aa).

Residues 1–15 show a composition bias toward low complexity; that stretch reads MEALILLSSQQSGSI. Disordered regions lie at residues 1–167, 179–312, 415–491, 553–739, 751–863, and 883–906; these read MEAL…DLEN, RFKP…STPS, HIYE…RLSL, QQQQ…TIKP, THNE…NNII, and LNIN…DHIN. The span at 16–25 shows a compositional bias: polar residues; sequence KNNCASTSDI. Composition is skewed to low complexity over residues 34–75, 96–107, and 141–153; these read IVIV…SSSS, SSPSSSPNTPKT, and TPTT…TPIK. The segment covering 154–167 has biased composition (basic and acidic residues); it reads PVKDPKEKEKDLEN. Residues 186–292 show a composition bias toward low complexity; that stretch reads NNTNNNNNIN…QQSSPTSSQT (107 aa). The segment covering 420–433 has biased composition (polar residues); it reads PNENNNGGSFQKPN. Low complexity-rich tracts occupy residues 450 to 471, 553 to 564, 573 to 589, and 618 to 635; these read GVSG…PSHP, QQQQQQQQQSSS, SQPQ…QTPQ, and HMPQ…MPHS. Polar residues predominate over residues 678–695; the sequence is YGSSPNLNGGKGSNNFLQ. The segment covering 712-723 has biased composition (low complexity); sequence SSVDSYSNSSPT. A compositionally biased stretch (polar residues) spans 754 to 768; it reads ENYMSSPRQPLSPHN. The span at 785–797 shows a compositional bias: basic and acidic residues; that stretch reads PHEHCNYIDKNDE. Low complexity predominate over residues 798 to 863; the sequence is YYSNNNNNNN…NNNNNNNNII (66 aa). A compositionally biased stretch (polar residues) spans 883–899; the sequence is LNINHQDGPNSASSTPR.

This is an uncharacterized protein from Dictyostelium discoideum (Social amoeba).